The following is a 114-amino-acid chain: Large ribosomal subunit protein bL19 (114 aa).

The protein belongs to the bacterial ribosomal protein bL19 family.

In terms of biological role, this protein is located at the 30S-50S ribosomal subunit interface and may play a role in the structure and function of the aminoacyl-tRNA binding site. The chain is Large ribosomal subunit protein bL19 from Clostridium acetobutylicum (strain ATCC 824 / DSM 792 / JCM 1419 / IAM 19013 / LMG 5710 / NBRC 13948 / NRRL B-527 / VKM B-1787 / 2291 / W).